The primary structure comprises 417 residues: Carboxypeptidase B (417 aa).

Positions 1–16 (MLAFLILVTVTLASAH) are cleaved as a signal peptide. The propeptide at 17 to 110 (HSGEHFEGDK…LEAQFDSRVR (94 aa)) is activation peptide. Residues 118 to 412 (KYNNWETIEA…LAIKYVTSYV (295 aa)) enclose the Peptidase M14 domain. A disulfide bridge connects residues C173 and C186. Residues H176 and E179 each contribute to the Zn(2+) site. Residues 176–179 (HARE), R234, and 251–252 (NR) each bind substrate. Intrachain disulfides connect C245–C268 and C259–C273. Zn(2+) is bound at residue H304. Substrate is bound by residues 305 to 306 (SY) and Y356. E378 acts as the Proton donor/acceptor in catalysis.

This sequence belongs to the peptidase M14 family. Zn(2+) serves as cofactor.

It localises to the secreted. Its subcellular location is the zymogen granule lumen. The enzyme catalyses Preferential release of a C-terminal lysine or arginine amino acid.. This is Carboxypeptidase B (CPB1) from Bos taurus (Bovine).